Consider the following 224-residue polypeptide: Thylakoid lumenal 15 kDa protein 1, chloroplastic (224 aa).

Residues 1–34 constitute a chloroplast transit peptide; the sequence is MVILSNVSLFSCCNISQKPSLFSPSSRSSHCPIR. Residues 35–81 constitute a thylakoid transit peptide; the sequence is CSQSQEGKEVVTSPLRSVVWSLGEEVSKRSLFALVSASLFFVDPALA. Pentapeptide repeat domains lie at 116 to 155 and 156 to 196; these read SILRQANFKGAKLLGASFFDADLTGADLSEADLRGADFSL and ANVT…PLRD.

The protein localises to the plastid. Its subcellular location is the chloroplast thylakoid lumen. The protein is Thylakoid lumenal 15 kDa protein 1, chloroplastic of Arabidopsis thaliana (Mouse-ear cress).